The following is a 546-amino-acid chain: Probable protein kinase UbiB (546 aa).

One can recognise a Protein kinase domain in the interval 124 to 502 (DFEIKPLASA…HVRQGQSRYF (379 aa)). ATP contacts are provided by residues 130–138 (LASASIAQV) and K153. D288 serves as the catalytic Proton acceptor. The next 2 helical transmembrane spans lie at 501 to 521 (YFLGIGATLVLSGTFLLVSRP) and 522 to 542 (EWGLMPGWLMAGGLIAWFVGW).

This sequence belongs to the ABC1 family. UbiB subfamily.

Its subcellular location is the cell inner membrane. Its pathway is cofactor biosynthesis; ubiquinone biosynthesis [regulation]. In terms of biological role, is probably a protein kinase regulator of UbiI activity which is involved in aerobic coenzyme Q (ubiquinone) biosynthesis. The chain is Probable protein kinase UbiB from Escherichia coli O45:K1 (strain S88 / ExPEC).